A 271-amino-acid polypeptide reads, in one-letter code: Shikimate dehydrogenase (NADP(+)) (271 aa).

Shikimate contacts are provided by residues 15–17 and T62; that span reads SKS. K66 acts as the Proton acceptor in catalysis. E78 contacts NADP(+). Residues N87 and D103 each coordinate shikimate. Residues 127–131, 151–156, and M214 contribute to the NADP(+) site; these read GAGGA and NRTQAK. Shikimate is bound at residue Y216. Residue G238 participates in NADP(+) binding.

The protein belongs to the shikimate dehydrogenase family. As to quaternary structure, homodimer.

The catalysed reaction is shikimate + NADP(+) = 3-dehydroshikimate + NADPH + H(+). The protein operates within metabolic intermediate biosynthesis; chorismate biosynthesis; chorismate from D-erythrose 4-phosphate and phosphoenolpyruvate: step 4/7. Involved in the biosynthesis of the chorismate, which leads to the biosynthesis of aromatic amino acids. Catalyzes the reversible NADPH linked reduction of 3-dehydroshikimate (DHSA) to yield shikimate (SA). The polypeptide is Shikimate dehydrogenase (NADP(+)) (Shewanella pealeana (strain ATCC 700345 / ANG-SQ1)).